A 364-amino-acid polypeptide reads, in one-letter code: Mannose-1-phosphate guanyltransferase (364 aa).

The protein belongs to the transferase hexapeptide repeat family.

Its subcellular location is the cytoplasm. The catalysed reaction is alpha-D-mannose 1-phosphate + GTP + H(+) = GDP-alpha-D-mannose + diphosphate. Its pathway is nucleotide-sugar biosynthesis; GDP-alpha-D-mannose biosynthesis; GDP-alpha-D-mannose from alpha-D-mannose 1-phosphate (GTP route): step 1/1. In terms of biological role, involved in cell wall synthesis where it is required for glycosylation. Involved in cell cycle progression through cell-size checkpoint. This is Mannose-1-phosphate guanyltransferase (MPG1) from Pichia angusta (Yeast).